The primary structure comprises 470 residues: Ribulose bisphosphate carboxylase large chain (470 aa).

N115 and T165 together coordinate substrate. Residue K167 is the Proton acceptor of the active site. K169 serves as a coordination point for substrate. Mg(2+)-binding residues include K193, D195, and E196. Position 193 is an N6-carboxylysine (K193). The active-site Proton acceptor is H286. Residues R287, H319, and S371 each coordinate substrate.

This sequence belongs to the RuBisCO large chain family. Type I subfamily. As to quaternary structure, heterohexadecamer of 8 large chains and 8 small chains. Forms a CsoS2-CsoS1-RuBisCO complex. Requires Mg(2+) as cofactor.

Its subcellular location is the carboxysome. The enzyme catalyses 2 (2R)-3-phosphoglycerate + 2 H(+) = D-ribulose 1,5-bisphosphate + CO2 + H2O. It catalyses the reaction D-ribulose 1,5-bisphosphate + O2 = 2-phosphoglycolate + (2R)-3-phosphoglycerate + 2 H(+). In terms of biological role, ruBisCO catalyzes two reactions: the carboxylation of D-ribulose 1,5-bisphosphate, the primary event in carbon dioxide fixation, as well as the oxidative fragmentation of the pentose substrate in the photorespiration process. Both reactions occur simultaneously and in competition at the same active site. The protein is Ribulose bisphosphate carboxylase large chain of Prochlorococcus marinus (strain MIT 9313).